The sequence spans 312 residues: MKIFFVSSSSIALEVFKEIVKHYEVVGVLTLPDRPKGRGQKLSQNVIKSEAIARNIKVLDPLILDDNVLNLVRDLNPDLMLVFSYGKIFKKEFLDLFPKGCINVHPSLLPKYRGVSPIQSAILNGDCVSGVTIQSMALEMDSGNILVQKNFKIRSYDTSHDISKLVSSLSPSLVLEALEKISKGFLGIPQKSSEATFCSFLKKESGFIDFNLSAFEIKNKINACNPWPLVRVRLDYNDIIFHRADFLEVDLYKERKIGEIVDFNPEKGLFVNTGKGILLLLEVQRPGRKVLDFKSFYNGSRQLIGQVFSSIE.

Residue 107–110 coordinates (6S)-5,6,7,8-tetrahydrofolate; sequence SLLP.

The protein belongs to the Fmt family.

It carries out the reaction L-methionyl-tRNA(fMet) + (6R)-10-formyltetrahydrofolate = N-formyl-L-methionyl-tRNA(fMet) + (6S)-5,6,7,8-tetrahydrofolate + H(+). Functionally, attaches a formyl group to the free amino group of methionyl-tRNA(fMet). The formyl group appears to play a dual role in the initiator identity of N-formylmethionyl-tRNA by promoting its recognition by IF2 and preventing the misappropriation of this tRNA by the elongation apparatus. The protein is Methionyl-tRNA formyltransferase of Borreliella burgdorferi (strain ZS7) (Borrelia burgdorferi).